Here is a 337-residue protein sequence, read N- to C-terminus: tRNA-dihydrouridine synthase B (337 aa).

Residues proline 19–alanine 21 and glutamine 73 each bind FMN. Residue cysteine 103 is the Proton donor of the active site. FMN contacts are provided by residues lysine 142, asparagine 203 to aspartate 205, and glycine 227 to arginine 228.

It belongs to the Dus family. DusB subfamily. Requires FMN as cofactor.

The enzyme catalyses a 5,6-dihydrouridine in tRNA + NAD(+) = a uridine in tRNA + NADH + H(+). The catalysed reaction is a 5,6-dihydrouridine in tRNA + NADP(+) = a uridine in tRNA + NADPH + H(+). Functionally, catalyzes the synthesis of 5,6-dihydrouridine (D), a modified base found in the D-loop of most tRNAs, via the reduction of the C5-C6 double bond in target uridines. In Pseudomonas putida (strain ATCC 47054 / DSM 6125 / CFBP 8728 / NCIMB 11950 / KT2440), this protein is tRNA-dihydrouridine synthase B.